Here is a 363-residue protein sequence, read N- to C-terminus: Probable aminomethyltransferase (363 aa).

It belongs to the GcvT family. The glycine cleavage system is composed of four proteins: P, T, L and H.

The enzyme catalyses N(6)-[(R)-S(8)-aminomethyldihydrolipoyl]-L-lysyl-[protein] + (6S)-5,6,7,8-tetrahydrofolate = N(6)-[(R)-dihydrolipoyl]-L-lysyl-[protein] + (6R)-5,10-methylene-5,6,7,8-tetrahydrofolate + NH4(+). Functionally, the glycine cleavage system catalyzes the degradation of glycine. This chain is Probable aminomethyltransferase, found in Halobacterium salinarum (strain ATCC 29341 / DSM 671 / R1).